A 96-amino-acid chain; its full sequence is Antitoxin ParD4 (96 aa).

Belongs to the ParD antitoxin family.

Antitoxin component of a type II toxin-antitoxin (TA) system. Neutralizes the effect of cognate toxin ParE4, but no other RelE or ParE toxin. This chain is Antitoxin ParD4 (parD4), found in Caulobacter vibrioides (strain ATCC 19089 / CIP 103742 / CB 15) (Caulobacter crescentus).